A 402-amino-acid chain; its full sequence is Speedy protein E2B (402 aa).

The interval 1–89 (MDRTETRFRK…EEPEKELAPE (89 aa)) is disordered. A compositionally biased stretch (polar residues) spans 16–39 (GKITTSRQPHPQNEQSPQRSTSGY). Residues 76-89 (DESEEEPEKELAPE) show a composition bias toward acidic residues.

This sequence belongs to the Speedy/Ringo family.

The sequence is that of Speedy protein E2B (SPDYE2B) from Homo sapiens (Human).